Reading from the N-terminus, the 230-residue chain is Urease accessory protein UreF (230 aa).

This sequence belongs to the UreF family. UreD, UreF and UreG form a complex that acts as a GTP-hydrolysis-dependent molecular chaperone, activating the urease apoprotein by helping to assemble the nickel containing metallocenter of UreC. The UreE protein probably delivers the nickel.

The protein resides in the cytoplasm. Functionally, required for maturation of urease via the functional incorporation of the urease nickel metallocenter. The sequence is that of Urease accessory protein UreF from Marinomonas sp. (strain MWYL1).